The chain runs to 51 residues: Large ribosomal subunit protein eL40 (51 aa).

This sequence belongs to the eukaryotic ribosomal protein eL40 family.

In Thermococcus gammatolerans (strain DSM 15229 / JCM 11827 / EJ3), this protein is Large ribosomal subunit protein eL40.